The sequence spans 111 residues: Small ribosomal subunit protein bS16 (111 aa).

It belongs to the bacterial ribosomal protein bS16 family.

This Rickettsia typhi (strain ATCC VR-144 / Wilmington) protein is Small ribosomal subunit protein bS16.